We begin with the raw amino-acid sequence, 123 residues long: Small ribosomal subunit protein uS12 (123 aa).

Residues 1-26 (MPTINQLVRKPRKSRSSLNKAPALQH) form a disordered region. Residue aspartate 90 is modified to 3-methylthioaspartic acid.

This sequence belongs to the universal ribosomal protein uS12 family. As to quaternary structure, part of the 30S ribosomal subunit. Contacts proteins S8 and S17. May interact with IF1 in the 30S initiation complex.

Functionally, with S4 and S5 plays an important role in translational accuracy. In terms of biological role, interacts with and stabilizes bases of the 16S rRNA that are involved in tRNA selection in the A site and with the mRNA backbone. Located at the interface of the 30S and 50S subunits, it traverses the body of the 30S subunit contacting proteins on the other side and probably holding the rRNA structure together. The combined cluster of proteins S8, S12 and S17 appears to hold together the shoulder and platform of the 30S subunit. This Ehrlichia chaffeensis (strain ATCC CRL-10679 / Arkansas) protein is Small ribosomal subunit protein uS12.